The chain runs to 236 residues: Leucyl/phenylalanyl-tRNA--protein transferase (236 aa).

It belongs to the L/F-transferase family.

The protein resides in the cytoplasm. The catalysed reaction is N-terminal L-lysyl-[protein] + L-leucyl-tRNA(Leu) = N-terminal L-leucyl-L-lysyl-[protein] + tRNA(Leu) + H(+). It catalyses the reaction N-terminal L-arginyl-[protein] + L-leucyl-tRNA(Leu) = N-terminal L-leucyl-L-arginyl-[protein] + tRNA(Leu) + H(+). The enzyme catalyses L-phenylalanyl-tRNA(Phe) + an N-terminal L-alpha-aminoacyl-[protein] = an N-terminal L-phenylalanyl-L-alpha-aminoacyl-[protein] + tRNA(Phe). In terms of biological role, functions in the N-end rule pathway of protein degradation where it conjugates Leu, Phe and, less efficiently, Met from aminoacyl-tRNAs to the N-termini of proteins containing an N-terminal arginine or lysine. The chain is Leucyl/phenylalanyl-tRNA--protein transferase from Vibrio parahaemolyticus serotype O3:K6 (strain RIMD 2210633).